We begin with the raw amino-acid sequence, 609 residues long: Aminopeptidase ltah-1.1 (609 aa).

Residues 137-139 (QCQ) and 268-273 (PFGGME) each bind substrate. H297 provides a ligand contact to Zn(2+). The active-site Proton acceptor is the E298. 2 residues coordinate Zn(2+): H301 and E320. Catalysis depends on Y387, which acts as the Proton donor. 564–566 (RMK) is a binding site for substrate.

Belongs to the peptidase M1 family. Zn(2+) is required as a cofactor.

The protein resides in the cytoplasm. The catalysed reaction is Release of N-terminal Arg and Lys from oligopeptides when P1' is not Pro. Also acts on arylamides of Arg and Lys.. Its function is as follows. Aminopeptidase which preferentially removes N-terminal Arg and Lys residues from peptides and proteins. This Caenorhabditis elegans protein is Aminopeptidase ltah-1.1.